A 96-amino-acid polypeptide reads, in one-letter code: Co-chaperonin GroES (96 aa).

It belongs to the GroES chaperonin family. As to quaternary structure, heptamer of 7 subunits arranged in a ring. Interacts with the chaperonin GroEL.

Its subcellular location is the cytoplasm. Its function is as follows. Together with the chaperonin GroEL, plays an essential role in assisting protein folding. The GroEL-GroES system forms a nano-cage that allows encapsulation of the non-native substrate proteins and provides a physical environment optimized to promote and accelerate protein folding. GroES binds to the apical surface of the GroEL ring, thereby capping the opening of the GroEL channel. The polypeptide is Co-chaperonin GroES (Trichlorobacter lovleyi (strain ATCC BAA-1151 / DSM 17278 / SZ) (Geobacter lovleyi)).